The primary structure comprises 352 residues: Protein RecA (352 aa).

67-74 (GPESSGKT) serves as a coordination point for ATP. The disordered stretch occupies residues 333-352 (DSTPDFAVDGNDAEETEQDF). A compositionally biased stretch (acidic residues) spans 343–352 (NDAEETEQDF).

This sequence belongs to the RecA family.

The protein resides in the cytoplasm. Its function is as follows. Can catalyze the hydrolysis of ATP in the presence of single-stranded DNA, the ATP-dependent uptake of single-stranded DNA by duplex DNA, and the ATP-dependent hybridization of homologous single-stranded DNAs. It interacts with LexA causing its activation and leading to its autocatalytic cleavage. The protein is Protein RecA of Klebsiella pneumoniae (strain 342).